A 519-amino-acid chain; its full sequence is Glutamate--cysteine ligase (519 aa).

Belongs to the glutamate--cysteine ligase type 1 family. Type 1 subfamily.

It carries out the reaction L-cysteine + L-glutamate + ATP = gamma-L-glutamyl-L-cysteine + ADP + phosphate + H(+). The protein operates within sulfur metabolism; glutathione biosynthesis; glutathione from L-cysteine and L-glutamate: step 1/2. This chain is Glutamate--cysteine ligase, found in Yersinia pseudotuberculosis serotype I (strain IP32953).